The following is a 378-amino-acid chain: LGILFSNANTWKEMRRFSLMTLRNFGMGKRSIEDRVQEEARCLVEELRKTNASPCDPTFILGCAPCNVICSIIFHNRFDYKDEHFLKLMEKFNENVRILSSPWLQICNNFPVLTDYLPGIHNTLVKNIEYTKNFIMEKVKEHQKSLDVNNPRDFIDCFLIKMDQENHLEFTLESLVTTVSDLFGAGTETTSTTLSISLLLLLKHPEVAAKVQEEIERVIGRHRSPCMQDRSRMPYTDAVIHEIQRYIDLIPINLPHAVTRDIKFRNYFIPKGMNIITSLTSVLHDEKEFPNPKVFDPGHFLDESGNFKKSDYFMPFSAGKRMCVGEGLARMELFLFLTSILQNFKLQSLVEPKDLDITAVVNGFASVPPAYQLCFSPV.

Residue cysteine 323 participates in heme binding.

The protein belongs to the cytochrome P450 family. Requires heme as cofactor.

The protein resides in the endoplasmic reticulum membrane. It is found in the microsome membrane. It catalyses the reaction an organic molecule + reduced [NADPH--hemoprotein reductase] + O2 = an alcohol + oxidized [NADPH--hemoprotein reductase] + H2O + H(+). Its function is as follows. Cytochromes P450 are a group of heme-thiolate monooxygenases. In liver microsomes, this enzyme is involved in an NADPH-dependent electron transport pathway. It oxidizes a variety of structurally unrelated compounds, including steroids, fatty acids, and xenobiotics. The polypeptide is Cytochrome P450 2C15 (CYP2C15) (Oryctolagus cuniculus (Rabbit)).